Reading from the N-terminus, the 362-residue chain is Protein RecA (362 aa).

67-74 (GPESSGKT) contributes to the ATP binding site. Residues 337–356 (VADAPADSAPAPVAAVAPKA) are compositionally biased toward low complexity. Residues 337–362 (VADAPADSAPAPVAAVAPKASARKSA) form a disordered region.

The protein belongs to the RecA family.

It localises to the cytoplasm. Its function is as follows. Can catalyze the hydrolysis of ATP in the presence of single-stranded DNA, the ATP-dependent uptake of single-stranded DNA by duplex DNA, and the ATP-dependent hybridization of homologous single-stranded DNAs. It interacts with LexA causing its activation and leading to its autocatalytic cleavage. The chain is Protein RecA from Clavibacter michiganensis subsp. michiganensis (strain NCPPB 382).